A 224-amino-acid chain; its full sequence is ATP synthase subunit a (224 aa).

The next 6 helical transmembrane spans lie at 17-37 (LSLN…IYWL), 72-92 (IFIS…FPYI), 99-119 (LTLT…YGWI), 125-145 (MFAH…MVCI), 170-190 (LLLT…VTFL), and 195-215 (IALL…FAVL).

Belongs to the ATPase A chain family. As to quaternary structure, F-type ATPases have 2 components, CF(1) - the catalytic core - and CF(0) - the membrane proton channel. CF(1) has five subunits: alpha(3), beta(3), gamma(1), delta(1), epsilon(1). CF(0) has three main subunits: a, b and c.

It localises to the mitochondrion inner membrane. Mitochondrial membrane ATP synthase (F(1)F(0) ATP synthase or Complex V) produces ATP from ADP in the presence of a proton gradient across the membrane which is generated by electron transport complexes of the respiratory chain. F-type ATPases consist of two structural domains, F(1) - containing the extramembraneous catalytic core and F(0) - containing the membrane proton channel, linked together by a central stalk and a peripheral stalk. During catalysis, ATP synthesis in the catalytic domain of F(1) is coupled via a rotary mechanism of the central stalk subunits to proton translocation. Key component of the proton channel; it may play a direct role in the translocation of protons across the membrane. The polypeptide is ATP synthase subunit a (mt:ATPase6) (Drosophila simulans (Fruit fly)).